The sequence spans 538 residues: Putative outer membrane porin BglH (538 aa).

Residues 1-25 form the signal peptide; that stretch reads MFRRNIITSAILLMAPLAFSAQSLA.

Belongs to the porin LamB (TC 1.B.3) family.

It is found in the cell outer membrane. Functionally, may be a sugar porin with a broad carbohydrate specificity. The polypeptide is Putative outer membrane porin BglH (bglH) (Escherichia coli (strain UTI89 / UPEC)).